Consider the following 210-residue polypeptide: Proteasome subunit beta (210 aa).

Positions 1–10 are cleaved as a propeptide — removed in mature form; by autocatalysis; it reads MKELDQLTKG. The active-site Nucleophile is threonine 11.

This sequence belongs to the peptidase T1B family. In terms of assembly, the 20S proteasome core is composed of 14 alpha and 14 beta subunits that assemble into four stacked heptameric rings, resulting in a barrel-shaped structure. The two inner rings, each composed of seven catalytic beta subunits, are sandwiched by two outer rings, each composed of seven alpha subunits. The catalytic chamber with the active sites is on the inside of the barrel. Has a gated structure, the ends of the cylinder being occluded by the N-termini of the alpha-subunits. Is capped at one or both ends by the proteasome regulatory ATPase, PAN.

Its subcellular location is the cytoplasm. The enzyme catalyses Cleavage of peptide bonds with very broad specificity.. The formation of the proteasomal ATPase PAN-20S proteasome complex, via the docking of the C-termini of PAN into the intersubunit pockets in the alpha-rings, triggers opening of the gate for substrate entry. Interconversion between the open-gate and close-gate conformations leads to a dynamic regulation of the 20S proteasome proteolysis activity. Functionally, component of the proteasome core, a large protease complex with broad specificity involved in protein degradation. This Methanopyrus kandleri (strain AV19 / DSM 6324 / JCM 9639 / NBRC 100938) protein is Proteasome subunit beta.